Consider the following 193-residue polypeptide: dCTP deaminase, dUMP-forming (193 aa).

Residues Lys101–Arg106, Asp119, Thr127–Glu129, Gln148, Tyr162, and Gln174 each bind dCTP. Glu129 acts as the Proton donor/acceptor in catalysis. Residues Thr160 to Asp193 are disordered. Over residues Leu167–Pro177 the composition is skewed to polar residues.

Belongs to the dCTP deaminase family. In terms of assembly, homotrimer.

It catalyses the reaction dCTP + 2 H2O = dUMP + NH4(+) + diphosphate. Its pathway is pyrimidine metabolism; dUMP biosynthesis; dUMP from dCTP: step 1/1. Functionally, bifunctional enzyme that catalyzes both the deamination of dCTP to dUTP and the hydrolysis of dUTP to dUMP without releasing the toxic dUTP intermediate. This is dCTP deaminase, dUMP-forming from Corynebacterium efficiens (strain DSM 44549 / YS-314 / AJ 12310 / JCM 11189 / NBRC 100395).